The sequence spans 297 residues: NAD kinase (297 aa).

Asp74 serves as the catalytic Proton acceptor. Residues 74–75 (DG), Arg79, 148–149 (NE), Arg176, Asp178, 189–194 (TAYALS), and Gln248 each bind NAD(+).

The protein belongs to the NAD kinase family. The cofactor is a divalent metal cation.

It localises to the cytoplasm. It carries out the reaction NAD(+) + ATP = ADP + NADP(+) + H(+). In terms of biological role, involved in the regulation of the intracellular balance of NAD and NADP, and is a key enzyme in the biosynthesis of NADP. Catalyzes specifically the phosphorylation on 2'-hydroxyl of the adenosine moiety of NAD to yield NADP. The sequence is that of NAD kinase from Blochmanniella pennsylvanica (strain BPEN).